The following is a 245-amino-acid chain: Chymotrypsinogen A (245 aa).

Cystine bridges form between Cys1–Cys122, Cys42–Cys58, Cys136–Cys201, Cys168–Cys182, and Cys191–Cys220. Residues 14 to 15 (SR) constitute a propeptide that is removed on maturation. The Peptidase S1 domain maps to 16–243 (IVNGEEAVPG…LVNWVQQTLA (228 aa)). Catalysis depends on charge relay system residues His57 and Asp102. Positions 147 to 148 (TN) are excised as a propeptide. Ser195 serves as the catalytic Charge relay system.

The protein belongs to the peptidase S1 family.

Its subcellular location is the secreted. The protein localises to the extracellular space. It carries out the reaction Preferential cleavage: Tyr-|-Xaa, Trp-|-Xaa, Phe-|-Xaa, Leu-|-Xaa.. This chain is Chymotrypsinogen A, found in Bos taurus (Bovine).